A 247-amino-acid polypeptide reads, in one-letter code: Adenosylcobinamide-GDP ribazoletransferase (247 aa).

A run of 5 helical transmembrane segments spans residues 34 to 54 (IITFPLIGLLLGAISGLVFMV), 59 to 79 (CGVPLAALFSVLVLALMTGGF), 113 to 133 (GGLALIFVVLAKILVLSELAL), 138 to 158 (ILASLAAACAVSRGTAALLMY), and 194 to 214 (VLLPGMHGVAAMVVTMVAIFI).

The protein belongs to the CobS family. It depends on Mg(2+) as a cofactor.

It localises to the cell inner membrane. The catalysed reaction is alpha-ribazole + adenosylcob(III)inamide-GDP = adenosylcob(III)alamin + GMP + H(+). It carries out the reaction alpha-ribazole 5'-phosphate + adenosylcob(III)inamide-GDP = adenosylcob(III)alamin 5'-phosphate + GMP + H(+). The protein operates within cofactor biosynthesis; adenosylcobalamin biosynthesis; adenosylcobalamin from cob(II)yrinate a,c-diamide: step 7/7. Its function is as follows. Joins adenosylcobinamide-GDP and alpha-ribazole to generate adenosylcobalamin (Ado-cobalamin). Also synthesizes adenosylcobalamin 5'-phosphate from adenosylcobinamide-GDP and alpha-ribazole 5'-phosphate. This is Adenosylcobinamide-GDP ribazoletransferase from Escherichia coli O7:K1 (strain IAI39 / ExPEC).